Here is a 127-residue protein sequence, read N- to C-terminus: Holo-[acyl-carrier-protein] synthase (127 aa).

The Mg(2+) site is built by Asp7 and Glu56.

It belongs to the P-Pant transferase superfamily. AcpS family. The cofactor is Mg(2+).

It is found in the cytoplasm. It catalyses the reaction apo-[ACP] + CoA = holo-[ACP] + adenosine 3',5'-bisphosphate + H(+). Functionally, transfers the 4'-phosphopantetheine moiety from coenzyme A to a Ser of acyl-carrier-protein. This is Holo-[acyl-carrier-protein] synthase from Leptospira biflexa serovar Patoc (strain Patoc 1 / Ames).